Reading from the N-terminus, the 172-residue chain is Probable phosphatase YqeG (172 aa).

Functionally, has low dephosphorylation activity on GMP and glucose-6-phosphate. This chain is Probable phosphatase YqeG (yqeG), found in Bacillus subtilis (strain 168).